The sequence spans 344 residues: N-acetyl-gamma-glutamyl-phosphate reductase (344 aa).

Residue cysteine 148 is part of the active site.

It belongs to the NAGSA dehydrogenase family. Type 1 subfamily.

Its subcellular location is the cytoplasm. The catalysed reaction is N-acetyl-L-glutamate 5-semialdehyde + phosphate + NADP(+) = N-acetyl-L-glutamyl 5-phosphate + NADPH + H(+). Its pathway is amino-acid biosynthesis; L-arginine biosynthesis; N(2)-acetyl-L-ornithine from L-glutamate: step 3/4. Functionally, catalyzes the NADPH-dependent reduction of N-acetyl-5-glutamyl phosphate to yield N-acetyl-L-glutamate 5-semialdehyde. This chain is N-acetyl-gamma-glutamyl-phosphate reductase, found in Clostridium kluyveri (strain NBRC 12016).